A 332-amino-acid polypeptide reads, in one-letter code: Methionyl-tRNA formyltransferase (332 aa).

114 to 117 (SLLP) serves as a coordination point for (6S)-5,6,7,8-tetrahydrofolate.

This sequence belongs to the Fmt family.

The enzyme catalyses L-methionyl-tRNA(fMet) + (6R)-10-formyltetrahydrofolate = N-formyl-L-methionyl-tRNA(fMet) + (6S)-5,6,7,8-tetrahydrofolate + H(+). In terms of biological role, attaches a formyl group to the free amino group of methionyl-tRNA(fMet). The formyl group appears to play a dual role in the initiator identity of N-formylmethionyl-tRNA by promoting its recognition by IF2 and preventing the misappropriation of this tRNA by the elongation apparatus. The protein is Methionyl-tRNA formyltransferase of Corynebacterium aurimucosum (strain ATCC 700975 / DSM 44827 / CIP 107346 / CN-1) (Corynebacterium nigricans).